Reading from the N-terminus, the 173-residue chain is Putative MgpC-like protein MPN_092 (173 aa).

The protein belongs to the MgpC family.

This Mycoplasma pneumoniae (strain ATCC 29342 / M129 / Subtype 1) (Mycoplasmoides pneumoniae) protein is Putative MgpC-like protein MPN_092.